The primary structure comprises 397 residues: Aurora kinase A (397 aa).

Residues 1–118 are disordered; that stretch reads MDRCKENCVS…SIQKTEDSKK (118 aa). Composition is skewed to polar residues over residues 29-55 and 84-102; these read QIPS…SQRV and RLSN…SGNN. A phosphoserine mark is found at Ser40 and Ser50. The span at 103–118 shows a compositional bias: basic and acidic residues; sequence SEKEQTSIQKTEDSKK. Positions 126–376 constitute a Protein kinase domain; that stretch reads FDIGRPLGKG…LAEVLEHPWI (251 aa). ATP is bound by residues Lys136, Lys155, and 203-206; that span reads LEYA. Asp249 functions as the Proton acceptor in the catalytic mechanism. A Glycyl lysine isopeptide (Lys-Gly) (interchain with G-Cter in SUMO2) cross-link involves residue Lys251. ATP-binding positions include 253–254 and Asp267; that span reads EN. The segment at 273–286 is activation segment; the sequence is HAPSSRRTTLCGTL. Residues Thr280 and Thr281 each carry the phosphothreonine modification. Position 335 is a phosphoserine; by PKA and PAK (Ser335). Positions 378 to 387 are enriched in polar residues; the sequence is ANSSKPPTGH. Positions 378–397 are disordered; it reads ANSSKPPTGHNSKEATSKSS. Residues 388-397 show a composition bias toward basic and acidic residues; the sequence is NSKEATSKSS.

This sequence belongs to the protein kinase superfamily. Ser/Thr protein kinase family. Aurora subfamily. As to quaternary structure, part of a complex composed of NEDD9, AURKA and CTTN; within the complex NEDD9 acts as a scaffold protein and is required for complex formation. Identified in a complex with AUNIP and NIN. Interacts with CPEB1, JTB, TACC1, TPX2, PPP2CA, as well as with the protein phosphatase type 1 (PP1) isoforms PPP1CA, PPP1CB and PPP1CC. Also interacts with its substrates ARHGEF2, BORA, KIF2A, PARD3, and p53/TP53. Interaction with BORA promotes phosphorylation of PLK1. Interacts with FBXL7 and CIMAP3. Interacts with GADD45A, competing with its oligomerization. Interacts (via C-terminus) with AUNIP (via C-terminus). Interacts with SIRT2. Interacts with FRY; this interaction facilitates AURKA-mediated PLK1 phosphorylation. Interacts with MYCN; interaction is phospho-independent and triggers AURKA activation; AURKA competes with FBXW7 for binding to unphosphorylated MYCN but not for binding to phosphorylated MYCN. Interacts with HNRNPU. Interacts with AAAS. Interacts with KLHL18 and CUL3. Interacts with FOXP1. Interacts with HDAC6; AURKA-mediated phosphorylation of HDAC6 promotes deacetylation of alpha-tubulin. Post-translationally, activated by phosphorylation at Thr-281; this brings about a change in the conformation of the activation segment. Phosphorylation at Thr-281 varies during the cell cycle and is highest during M phase. Autophosphorylated at Thr-281 upon TPX2 binding. Thr-281 can be phosphorylated by several kinases, including PAK and PKA. Protein phosphatase type 1 (PP1) binds AURKA and inhibits its activity by dephosphorylating Thr-281 during mitosis. Phosphorylation at Ser-335 decreases the kinase activity. PPP2CA controls degradation by dephosphorylating Ser-52 at the end of mitosis. Phosphorylated in embryonic brain neurons. Ubiquitinated by CHFR, leading to its degradation by the proteasome. Ubiquitinated by the anaphase-promoting complex (APC), leading to its degradation by the proteasome. Ubiquitinated by the E3 ubiquitin-protein ligase complex SCF(FBXL7) during mitosis, leading to its degradation by the proteasome. Ubiquitinated by the CUL3-KLHL18 ligase leading to its activation at the centrosome which is required for initiating mitotic entry. Ubiquitination mediated by CUL3-KLHL18 ligase does not lead to its degradation by the proteasome. Detected in neurons in brain cortex and hippocampus (at protein level). Expressed in mammary gland and tumor.

Its subcellular location is the cytoplasm. The protein resides in the cytoskeleton. It is found in the microtubule organizing center. It localises to the centrosome. The protein localises to the spindle pole. Its subcellular location is the centriole. The protein resides in the cell projection. It is found in the neuron projection. It localises to the cilium. The protein localises to the cilium basal body. Its subcellular location is the basolateral cell membrane. It catalyses the reaction L-seryl-[protein] + ATP = O-phospho-L-seryl-[protein] + ADP + H(+). The catalysed reaction is L-threonyl-[protein] + ATP = O-phospho-L-threonyl-[protein] + ADP + H(+). Its activity is regulated as follows. Activation of CDK1, appears to be an upstream event of AURKA activation. Phosphatase inhibitor-2 (PPP1R2) and TPX2 act also as activators. Inactivated by the G2 checkpoint. Inhibited by GADD45A and p53/TP53, and through dephosphorylation by protein phosphatase type 1 (PP1). MLN8054 is also a potent and selective inhibitor. Activated during the early phase of cilia disassembly in the presence of FBXL7 and CIMAP3. Inhibited by the small molecule inhibitor VX-680. Mitotic serine/threonine kinase that contributes to the regulation of cell cycle progression. Associates with the centrosome and the spindle microtubules during mitosis and plays a critical role in various mitotic events including the establishment of mitotic spindle, centrosome duplication, centrosome separation as well as maturation, chromosomal alignment, spindle assembly checkpoint, and cytokinesis. Required for normal spindle positioning during mitosis and for the localization of NUMA1 and DCTN1 to the cell cortex during metaphase. Required for initial activation of CDK1 at centrosomes. Phosphorylates numerous target proteins, including ARHGEF2, BORA, BRCA1, CDC25B, DLGP5, HDAC6, KIF2A, LATS2, NDEL1, PARD3, PPP1R2, PLK1, RASSF1, TACC3, p53/TP53 and TPX2. Phosphorylates MCRS1 which is required for MCRS1-mediated kinetochore fiber assembly and mitotic progression. Regulates KIF2A tubulin depolymerase activity. Required for normal axon formation. Plays a role in microtubule remodeling during neurite extension. Important for microtubule formation and/or stabilization. Also acts as a key regulatory component of the p53/TP53 pathway, and particularly the checkpoint-response pathways critical for oncogenic transformation of cells, by phosphorylating and stabilizating p53/TP53. Phosphorylates its own inhibitors, the protein phosphatase type 1 (PP1) isoforms, to inhibit their activity. Inhibits cilia outgrowth. Required for cilia disassembly via phosphorylation of HDAC6 and subsequent deacetylation of alpha-tubulin. Regulates protein levels of the anti-apoptosis protein BIRC5 by suppressing the expression of the SCF(FBXL7) E3 ubiquitin-protein ligase substrate adapter FBXL7 through the phosphorylation of the transcription factor FOXP1. In Rattus norvegicus (Rat), this protein is Aurora kinase A.